A 382-amino-acid polypeptide reads, in one-letter code: uncharacterized protein (382 aa).

Transmembrane regions (helical) follow at residues 14 to 34, 45 to 65, 75 to 95, 102 to 122, 131 to 151, 157 to 177, 206 to 226, 235 to 255, 270 to 290, 291 to 311, 325 to 345, and 348 to 368; these read GLLL…LWLA, VVSS…GYVI, YLAS…IGFW, FVAG…LMCS, LLAA…LLVS, LMSV…PLLF, VNGC…MPLF, ASIG…QWPI, VQVF…AMAP, ALFI…AWAC, ALLL…AMLM, and FSDN…LLML.

The protein belongs to the major facilitator superfamily. YcaD (TC 2.A.1.26) family.

Its subcellular location is the cell inner membrane. This is an uncharacterized protein from Escherichia coli O17:K52:H18 (strain UMN026 / ExPEC).